We begin with the raw amino-acid sequence, 197 residues long: Histidine biosynthesis bifunctional protein HisIE (197 aa).

The phosphoribosyl-AMP cyclohydrolase stretch occupies residues 1–108 (MMTLYPVVVQ…RFEETGSPTF (108 aa)). The segment at 109 to 197 (WLELYRLVRK…VMRELEKRRK (89 aa)) is phosphoribosyl-ATP pyrophosphohydrolase.

It in the N-terminal section; belongs to the PRA-CH family. The protein in the C-terminal section; belongs to the PRA-PH family.

It localises to the cytoplasm. The catalysed reaction is 1-(5-phospho-beta-D-ribosyl)-ATP + H2O = 1-(5-phospho-beta-D-ribosyl)-5'-AMP + diphosphate + H(+). It carries out the reaction 1-(5-phospho-beta-D-ribosyl)-5'-AMP + H2O = 1-(5-phospho-beta-D-ribosyl)-5-[(5-phospho-beta-D-ribosylamino)methylideneamino]imidazole-4-carboxamide. It functions in the pathway amino-acid biosynthesis; L-histidine biosynthesis; L-histidine from 5-phospho-alpha-D-ribose 1-diphosphate: step 2/9. It participates in amino-acid biosynthesis; L-histidine biosynthesis; L-histidine from 5-phospho-alpha-D-ribose 1-diphosphate: step 3/9. This Thermotoga maritima (strain ATCC 43589 / DSM 3109 / JCM 10099 / NBRC 100826 / MSB8) protein is Histidine biosynthesis bifunctional protein HisIE (hisI).